A 258-amino-acid chain; its full sequence is MILTLDVGNTQIFGGVYEGDNLKLTFRKTSKGTLTSDELGLFLRQVLRENGLDPKKIREVGVSSVVPDINRTIHNSCMKYLGLEPFMIGPGIKTGLNIRGRDAANLGADRVADAIAAMNIYPDRNLLIIDFGTANTYDAISKNKEYKGGAIQIGVSTSLNALIQNAALLSKVEILDPGGAASLTTEGQIQAGLYYGNLGAIKEFITRIKKECFGNEESIVIGTGGMGRLFESAKVFDVYLPDLVILGIKIALEQNRSV.

6-13 (DVGNTQIF) contacts ATP. Substrate is bound at residue 107 to 110 (GADR). Asp109 (proton acceptor) is an active-site residue. Residue Asp130 participates in K(+) binding. Thr133 lines the ATP pocket. Residue Thr185 coordinates substrate.

Belongs to the type III pantothenate kinase family. As to quaternary structure, homodimer. NH4(+) serves as cofactor. K(+) is required as a cofactor.

The protein resides in the cytoplasm. It carries out the reaction (R)-pantothenate + ATP = (R)-4'-phosphopantothenate + ADP + H(+). Its pathway is cofactor biosynthesis; coenzyme A biosynthesis; CoA from (R)-pantothenate: step 1/5. Catalyzes the phosphorylation of pantothenate (Pan), the first step in CoA biosynthesis. This is Type III pantothenate kinase from Elusimicrobium minutum (strain Pei191).